A 197-amino-acid chain; its full sequence is Fucoxanthin-chlorophyll a-c binding protein D, chloroplastic (197 aa).

Residues 1–31 constitute a chloroplast transit peptide; the sequence is MKTAVIASLIAGAAAFAPAKNAARTSVATNM. 3 helical membrane-spanning segments follow: residues 73 to 94, 114 to 133, and 174 to 196; these read ISML…PGTI, PAGG…SSVM, and GRAA…SLLP.

This sequence belongs to the fucoxanthin chlorophyll protein family. The LHC complex of chromophytic algae is composed of fucoxanthin, chlorophyll A and C bound non-covalently by fucoxanthin chlorophyll proteins (FCPs). The ratio of the pigments in LHC; fucoxanthin: chlorophyll C: chlorophyll A; (0.6-1): (0.1-0.3): (1).

The protein localises to the plastid. It localises to the chloroplast thylakoid membrane. Its function is as follows. The light-harvesting complex (LHC) functions as a light receptor, it captures and delivers excitation energy to photosystems with which it is closely associated. Energy is transferred from the carotenoid and chlorophyll C (or B) to chlorophyll A and the photosynthetic reaction centers where it is used to synthesize ATP and reducing power. The sequence is that of Fucoxanthin-chlorophyll a-c binding protein D, chloroplastic (FCPD) from Phaeodactylum tricornutum (Diatom).